The following is a 199-amino-acid chain: Elongation factor Ts (199 aa).

An involved in Mg(2+) ion dislocation from EF-Tu region spans residues 80-83 (TDFV).

It belongs to the EF-Ts family.

The protein localises to the cytoplasm. Functionally, associates with the EF-Tu.GDP complex and induces the exchange of GDP to GTP. It remains bound to the aminoacyl-tRNA.EF-Tu.GTP complex up to the GTP hydrolysis stage on the ribosome. This chain is Elongation factor Ts, found in Thermodesulfovibrio yellowstonii (strain ATCC 51303 / DSM 11347 / YP87).